Here is an 817-residue protein sequence, read N- to C-terminus: Transcription factor SPT20 homolog-like 2 (817 aa).

Over residues 1–14 (MDRDLEQALDRTEN) the composition is skewed to basic and acidic residues. Disordered stretches follow at residues 1–28 (MDRD…RRRY), 249–275 (PQQE…ERKV), 369–553 (PRKK…AAGR), 598–630 (PGSG…AVQA), and 675–697 (QLQQ…LGLS). The span at 423–440 (SHSSSGPASVSQLSSWKT) shows a compositional bias: polar residues. 4 stretches are compositionally biased toward low complexity: residues 469-479 (SSSGKISSGNS), 494-505 (PAAAPAVAAAAP), 513-531 (AAPA…GAAP), and 598-618 (PGSG…SSGG).

Belongs to the SPT20 family.

This is Transcription factor SPT20 homolog-like 2 (SUPT20HL2) from Homo sapiens (Human).